Reading from the N-terminus, the 152-residue chain is Aspartate carbamoyltransferase regulatory chain (152 aa).

Cys109, Cys114, Cys138, and Cys141 together coordinate Zn(2+).

This sequence belongs to the PyrI family. As to quaternary structure, contains catalytic and regulatory chains. Zn(2+) serves as cofactor.

In terms of biological role, involved in allosteric regulation of aspartate carbamoyltransferase. The polypeptide is Aspartate carbamoyltransferase regulatory chain (Thermoplasma volcanium (strain ATCC 51530 / DSM 4299 / JCM 9571 / NBRC 15438 / GSS1)).